The following is a 372-amino-acid chain: Chaperone protein DnaJ (372 aa).

Residues 5–69 form the J domain; it reads EFYDRLGVSK…QKRAAYDQYG (65 aa). The CR-type zinc finger occupies 129 to 211; sequence GTEKEVKYHR…CHGTGHEKQA (83 aa). Positions 142, 145, 159, 162, 185, 188, 199, and 202 each coordinate Zn(2+). CXXCXGXG motif repeat units follow at residues 142–149, 159–166, 185–192, and 199–206; these read CRTCNGSG, CGRCHGAG, CDVCHGRG, and CTTCHGTG.

The protein belongs to the DnaJ family. Homodimer. Zn(2+) serves as cofactor.

The protein localises to the cytoplasm. Functionally, participates actively in the response to hyperosmotic and heat shock by preventing the aggregation of stress-denatured proteins and by disaggregating proteins, also in an autonomous, DnaK-independent fashion. Unfolded proteins bind initially to DnaJ; upon interaction with the DnaJ-bound protein, DnaK hydrolyzes its bound ATP, resulting in the formation of a stable complex. GrpE releases ADP from DnaK; ATP binding to DnaK triggers the release of the substrate protein, thus completing the reaction cycle. Several rounds of ATP-dependent interactions between DnaJ, DnaK and GrpE are required for fully efficient folding. Also involved, together with DnaK and GrpE, in the DNA replication of plasmids through activation of initiation proteins. The sequence is that of Chaperone protein DnaJ from Streptococcus pneumoniae (strain ATCC BAA-255 / R6).